Here is a 100-residue protein sequence, read N- to C-terminus: Protamine-2 (100 aa).

The disordered stretch occupies residues 1 to 45 (MVRYHVRSPSERPHREYRQLVNGQEQGRHGQEEQGMSAEGVEGYG). Residues Ser-8, Ser-10, and Ser-37 each carry the phosphoserine modification. Basic and acidic residues predominate over residues 8–18 (SPSERPHREYR).

This sequence belongs to the protamine P2 family. In terms of assembly, interacts with TDRP. Post-translationally, proteolytic processing into mature chains is required for histone eviction during spermatogenesis. Transition proteins (TNP1 and TNP2) are required for processing. Testis.

It is found in the nucleus. It localises to the chromosome. Its function is as follows. Protamines substitute for histones in the chromatin of sperm during the haploid phase of spermatogenesis. They compact sperm DNA into a highly condensed, stable and inactive complex. This is Protamine-2 (PRM2) from Alouatta seniculus (Red howler monkey).